A 594-amino-acid polypeptide reads, in one-letter code: Aspartate--tRNA(Asp/Asn) ligase (594 aa).

Residue glutamate 176 participates in L-aspartate binding. Residues 200–203 form an aspartate region; that stretch reads QIFK. Arginine 222 lines the L-aspartate pocket. Residues 222 to 224 and glutamine 231 each bind ATP; that span reads RDE. Histidine 450 serves as a coordination point for L-aspartate. Glutamate 484 is a binding site for ATP. Residue arginine 491 participates in L-aspartate binding. Residue 536–539 participates in ATP binding; that stretch reads GLDR.

It belongs to the class-II aminoacyl-tRNA synthetase family. Type 1 subfamily. In terms of assembly, homodimer.

The protein localises to the cytoplasm. The catalysed reaction is tRNA(Asx) + L-aspartate + ATP = L-aspartyl-tRNA(Asx) + AMP + diphosphate. Aspartyl-tRNA synthetase with relaxed tRNA specificity since it is able to aspartylate not only its cognate tRNA(Asp) but also tRNA(Asn). Reaction proceeds in two steps: L-aspartate is first activated by ATP to form Asp-AMP and then transferred to the acceptor end of tRNA(Asp/Asn). The protein is Aspartate--tRNA(Asp/Asn) ligase of Geobacillus sp. (strain WCH70).